The chain runs to 432 residues: Adenosylhomocysteinase (432 aa).

Ser2 carries the post-translational modification N-acetylserine. Residues Thr57, Asp131, and Glu156 each coordinate substrate. Ser183 is subject to Phosphoserine. The NAD binding stretch occupies residues 183-350; sequence SVTKSKFDNL…EGRLVNLGCA (168 aa). Positions 186 and 190 each coordinate substrate. At Lys186 the chain carries N6-(2-hydroxyisobutyryl)lysine. At Tyr193 the chain carries Phosphotyrosine.

Belongs to the adenosylhomocysteinase family. As to quaternary structure, homotetramer. Interaction with AHCYL1. It depends on NAD(+) as a cofactor.

Its subcellular location is the cytoplasm. It is found in the melanosome. It localises to the nucleus. The protein localises to the endoplasmic reticulum. It catalyses the reaction S-adenosyl-L-homocysteine + H2O = L-homocysteine + adenosine. It participates in amino-acid biosynthesis; L-homocysteine biosynthesis; L-homocysteine from S-adenosyl-L-homocysteine: step 1/1. Catalyzes the hydrolysis of S-adenosyl-L-homocysteine to form adenosine and homocysteine. Binds copper ions. The chain is Adenosylhomocysteinase (AHCY) from Macaca fascicularis (Crab-eating macaque).